Consider the following 186-residue polypeptide: Ribosome-recycling factor (186 aa).

This sequence belongs to the RRF family.

It is found in the cytoplasm. Its function is as follows. Responsible for the release of ribosomes from messenger RNA at the termination of protein biosynthesis. May increase the efficiency of translation by recycling ribosomes from one round of translation to another. The sequence is that of Ribosome-recycling factor from Rickettsia felis (strain ATCC VR-1525 / URRWXCal2) (Rickettsia azadi).